A 470-amino-acid polypeptide reads, in one-letter code: ATP-dependent protease ATPase subunit HslU (470 aa).

ATP is bound by residues valine 22 and 64 to 69 (GVGKTE). The disordered stretch occupies residues 145–187 (KKANNNTNSNNPLESLFGGSIPNFGQNNDDEEETPTDEVKTKR). Residues aspartate 283, glutamate 348, and arginine 420 each contribute to the ATP site.

This sequence belongs to the ClpX chaperone family. HslU subfamily. In terms of assembly, a double ring-shaped homohexamer of HslV is capped on each side by a ring-shaped HslU homohexamer. The assembly of the HslU/HslV complex is dependent on binding of ATP.

Its subcellular location is the cytoplasm. In terms of biological role, ATPase subunit of a proteasome-like degradation complex; this subunit has chaperone activity. The binding of ATP and its subsequent hydrolysis by HslU are essential for unfolding of protein substrates subsequently hydrolyzed by HslV. HslU recognizes the N-terminal part of its protein substrates and unfolds these before they are guided to HslV for hydrolysis. This chain is ATP-dependent protease ATPase subunit HslU, found in Staphylococcus saprophyticus subsp. saprophyticus (strain ATCC 15305 / DSM 20229 / NCIMB 8711 / NCTC 7292 / S-41).